The chain runs to 540 residues: MTAEVKVEEKQVESEVVIAPAVVPEETTVKAVVEETKVEEDESKPEGVEKSASFKEESDFFADLKESEKKALSDLKSKLEEAIVDNTLLKTKKKESSPMKEKKEEVVKPEAEVEKKKEEAAEEKVEEEKKSEAVVTEEAPKAETVEAVVTEEIIPKEEVTTVVEKVEEETKEEEKKTEDVVTEEVKAETIEVEDEDESVDKDIELWGVPLLPSKGAESTDVILLKFLRARDFKVNEAFEMLKKTLKWRKQNKIDSILGEEFGEDLATAAYMNGVDRESHPVCYNVHSEELYQTIGSEKNREKFLRWRFQLMEKGIQKLNLKPGGVTSLLQIHDLKNAPGVSRTEIWVGIKKVIETLQDNYPEFVSRNIFINVPFWFYAMRAVLSPFLTQRTKSKFVVARPAKVRETLLKYIPADELPVQYGGFKTVDDTEFSNETVSEVVVKPGSSETIEIPAPETEGTLVWDIAVLGWEVNYKEEFVPTEEGAYTVIVQKVKKMGANEGPIRNSFKNSQAGKIVLTVDNVSGKKKKVLYRYRTKTESSS.

Position 53 is a phosphoserine (serine 53). Residues 61–183 (FADLKESEKK…EKKTEDVVTE (123 aa)) adopt a coiled-coil conformation. The interval 89–140 (LKTKKKESSPMKEKKEEVVKPEAEVEKKKEEAAEEKVEEEKKSEAVVTEEAP) is disordered. The segment covering 94–140 (KESSPMKEKKEEVVKPEAEVEKKKEEAAEEKVEEEKKSEAVVTEEAP) has biased composition (basic and acidic residues). A Glycyl lysine isopeptide (Lys-Gly) (interchain with G-Cter in ubiquitin) cross-link involves residue lysine 249. The CRAL-TRIO domain occupies 258 to 428 (GEEFGEDLAT…QYGGFKTVDD (171 aa)). The GOLD domain occupies 433–534 (NETVSEVVVK…KKKVLYRYRT (102 aa)).

It belongs to the patellin family.

Its subcellular location is the membrane. It localises to the cytoplasm. Functionally, carrier protein that may be involved in membrane-trafficking events associated with cell plate formation during cytokinesis. Binds to some hydrophobic molecules such as phosphoinositides and promotes their transfer between the different cellular sites. This Arabidopsis thaliana (Mouse-ear cress) protein is Patellin-4 (PATL4).